A 220-amino-acid chain; its full sequence is Protein-L-isoaspartate O-methyltransferase (220 aa).

The active site involves Ser69.

It belongs to the methyltransferase superfamily. L-isoaspartyl/D-aspartyl protein methyltransferase family.

It localises to the cytoplasm. The enzyme catalyses [protein]-L-isoaspartate + S-adenosyl-L-methionine = [protein]-L-isoaspartate alpha-methyl ester + S-adenosyl-L-homocysteine. In terms of biological role, catalyzes the methyl esterification of L-isoaspartyl residues in peptides and proteins that result from spontaneous decomposition of normal L-aspartyl and L-asparaginyl residues. It plays a role in the repair and/or degradation of damaged proteins. This chain is Protein-L-isoaspartate O-methyltransferase, found in Alcanivorax borkumensis (strain ATCC 700651 / DSM 11573 / NCIMB 13689 / SK2).